The primary structure comprises 206 residues: Putative type I restriction enzyme MpnIIP endonuclease subunit C-terminal part (206 aa).

Functionally, the C-terminal section of a putative type I restriction enzyme that if reconstituted might recognize 5'-GAN(7)TAY-3' and cleave a random distance away. Subunit R is required for both nuclease and ATPase activities, but not for modification. The sequence is that of Putative type I restriction enzyme MpnIIP endonuclease subunit C-terminal part from Mycoplasma pneumoniae (strain ATCC 29342 / M129 / Subtype 1) (Mycoplasmoides pneumoniae).